The primary structure comprises 125 residues: MAPAKKGGEKKKGRSAINEVVTREYTINIHKRIHGVGFKKRAPRALKEIRKFAMKEMGTPDVRIDTRLNKAVWAKGIRNVPYRIRVRLSRKRNEDEDSPNKLYTLVTYVPVTTFKNLQTVNVDEN.

Residue Met-1 is modified to N-acetylmethionine. Ser-15 is subject to Phosphoserine. Lys-55 and Lys-70 each carry N6-succinyllysine. The residue at position 75 (Lys-75) is an N6-acetyllysine; alternate. Lys-75 is subject to N6-succinyllysine; alternate. The residue at position 98 (Ser-98) is a Phosphoserine.

The protein belongs to the eukaryotic ribosomal protein eL31 family. Component of the large ribosomal subunit.

The protein localises to the cytoplasm. Functionally, component of the large ribosomal subunit. The ribosome is a large ribonucleoprotein complex responsible for the synthesis of proteins in the cell. The sequence is that of Large ribosomal subunit protein eL31 (RPL31) from Oryctolagus cuniculus (Rabbit).